We begin with the raw amino-acid sequence, 172 residues long: Shikimate kinase (172 aa).

14–19 is a binding site for ATP; sequence GAGKST. Residue Ser18 participates in Mg(2+) binding. The substrate site is built by Asp36, Arg60, and Gly82. Arg120 contributes to the ATP binding site. Arg139 contributes to the substrate binding site. Gln156 serves as a coordination point for ATP.

It belongs to the shikimate kinase family. As to quaternary structure, monomer. The cofactor is Mg(2+).

The protein localises to the cytoplasm. The enzyme catalyses shikimate + ATP = 3-phosphoshikimate + ADP + H(+). The protein operates within metabolic intermediate biosynthesis; chorismate biosynthesis; chorismate from D-erythrose 4-phosphate and phosphoenolpyruvate: step 5/7. Its function is as follows. Catalyzes the specific phosphorylation of the 3-hydroxyl group of shikimic acid using ATP as a cosubstrate. This Vibrio campbellii (strain ATCC BAA-1116) protein is Shikimate kinase.